The following is a 203-amino-acid chain: N-(5'-phosphoribosyl)anthranilate isomerase (203 aa).

This sequence belongs to the TrpF family.

It carries out the reaction N-(5-phospho-beta-D-ribosyl)anthranilate = 1-(2-carboxyphenylamino)-1-deoxy-D-ribulose 5-phosphate. It functions in the pathway amino-acid biosynthesis; L-tryptophan biosynthesis; L-tryptophan from chorismate: step 3/5. The protein is N-(5'-phosphoribosyl)anthranilate isomerase of Thermoanaerobacter sp. (strain X514).